The primary structure comprises 232 residues: LexA repressor (232 aa).

A DNA-binding region (H-T-H motif) is located at residues 26–46 (FDEMKDALDLRSKSGIHRLIT). Residues serine 153 and lysine 191 each act as for autocatalytic cleavage activity in the active site.

It belongs to the peptidase S24 family. In terms of assembly, homodimer.

It catalyses the reaction Hydrolysis of Ala-|-Gly bond in repressor LexA.. Represses a number of genes involved in the response to DNA damage (SOS response), including recA and lexA. In the presence of single-stranded DNA, RecA interacts with LexA causing an autocatalytic cleavage which disrupts the DNA-binding part of LexA, leading to derepression of the SOS regulon and eventually DNA repair. The sequence is that of LexA repressor from Bradyrhizobium sp. (strain ORS 278).